A 150-amino-acid polypeptide reads, in one-letter code: Large ribosomal subunit protein bL9 (150 aa).

The protein belongs to the bacterial ribosomal protein bL9 family.

In terms of biological role, binds to the 23S rRNA. The polypeptide is Large ribosomal subunit protein bL9 (Burkholderia cenocepacia (strain HI2424)).